Reading from the N-terminus, the 612-residue chain is Methionine--tRNA ligase (612 aa).

The 'HIGH' region signature appears at 12-22 (PYANGPRHIGH). 4 residues coordinate Zn(2+): cysteine 144, cysteine 147, cysteine 157, and cysteine 160. The short motif at 348 to 352 (KFSSS) is the 'KMSKS' region element. Residue serine 351 coordinates ATP.

The protein belongs to the class-I aminoacyl-tRNA synthetase family. MetG type 1 subfamily. In terms of assembly, monomer. Zn(2+) is required as a cofactor.

Its subcellular location is the cytoplasm. It catalyses the reaction tRNA(Met) + L-methionine + ATP = L-methionyl-tRNA(Met) + AMP + diphosphate. Its function is as follows. Is required not only for elongation of protein synthesis but also for the initiation of all mRNA translation through initiator tRNA(fMet) aminoacylation. The chain is Methionine--tRNA ligase from Corynebacterium kroppenstedtii (strain DSM 44385 / JCM 11950 / CIP 105744 / CCUG 35717).